Here is a 190-residue protein sequence, read N- to C-terminus: Threonylcarbamoyl-AMP synthase (190 aa).

Residues 7 to 190 (TGSIAAAVDL…ALTGELFRQG (184 aa)) enclose the YrdC-like domain.

The protein belongs to the SUA5 family. TsaC subfamily.

The protein localises to the cytoplasm. It carries out the reaction L-threonine + hydrogencarbonate + ATP = L-threonylcarbamoyladenylate + diphosphate + H2O. Required for the formation of a threonylcarbamoyl group on adenosine at position 37 (t(6)A37) in tRNAs that read codons beginning with adenine. Catalyzes the conversion of L-threonine, HCO(3)(-)/CO(2) and ATP to give threonylcarbamoyl-AMP (TC-AMP) as the acyladenylate intermediate, with the release of diphosphate. The sequence is that of Threonylcarbamoyl-AMP synthase from Salmonella choleraesuis (strain SC-B67).